Here is a 389-residue protein sequence, read N- to C-terminus: UDP-GlcNAc:betaGal beta-1,3-N-acetylglucosaminyltransferase 8 (389 aa).

The Cytoplasmic portion of the chain corresponds to 1 to 7; sequence MRCRKCQ. The helical; Signal-anchor for type II membrane protein transmembrane segment at 8–24 threads the bilayer; the sequence is LCLSALLTLLGLKVYIE. The Lumenal segment spans residues 25-389; that stretch reads WTSESWLKKA…RHLWVPELQC (365 aa). The tract at residues 36–57 is disordered; sequence PRGALPSPTPPNAEPTLPTNLS. Residues Asn-55 and Asn-212 are each glycosylated (N-linked (GlcNAc...) asparagine).

This sequence belongs to the glycosyltransferase 31 family. As to quaternary structure, interacts with B3GNT2; this interaction greatly increases B3GNT2 catalytic activity, independently of B3GNT8 enzymatic activity.

The protein localises to the golgi apparatus membrane. The protein operates within protein modification; protein glycosylation. Functionally, beta-1,3-N-acetylglucosaminyltransferase that plays a role in the elongation of specific branch structures of multiantennary N-glycans. Has strong activity towards tetraantennary N-glycans and 2,6 triantennary glycans. In Mus musculus (Mouse), this protein is UDP-GlcNAc:betaGal beta-1,3-N-acetylglucosaminyltransferase 8.